The following is a 639-amino-acid chain: 2-oxoacid:ferredoxin oxidoreductase 1, subunit alpha (639 aa).

The YPITP motif motif lies at 266 to 270; that stretch reads YPITP. Residues threonine 269 and arginine 352 each coordinate substrate.

As to quaternary structure, heterodimer composed of an alpha and a beta subunit.

The enzyme catalyses a 2-oxocarboxylate + 2 oxidized [2Fe-2S]-[ferredoxin] + CoA = an acyl-CoA + 2 reduced [2Fe-2S]-[ferredoxin] + CO2 + H(+). Its function is as follows. Catalyzes the coenzyme A-dependent oxidative decarboxylation of different 2-oxoacids such as pyruvate, 2-oxobutyrate and glyoxylate to form their CoA derivatives. The sequence is that of 2-oxoacid:ferredoxin oxidoreductase 1, subunit alpha from Aeropyrum pernix (strain ATCC 700893 / DSM 11879 / JCM 9820 / NBRC 100138 / K1).